The primary structure comprises 129 residues: MAKPGTRTRKKVKKTVVDGVAHIHASFNNTIVTISDRQGNVLSWATSGGSGFRGSRKSTPFAAQVAAERAGNAAAEYGLKNLDVEVKGPGPGRESAVRALNACGYKITNITDVTPIPHNGCRPPKKRRV.

The protein belongs to the universal ribosomal protein uS11 family. Part of the 30S ribosomal subunit. Interacts with proteins S7 and S18. Binds to IF-3.

Functionally, located on the platform of the 30S subunit, it bridges several disparate RNA helices of the 16S rRNA. Forms part of the Shine-Dalgarno cleft in the 70S ribosome. The protein is Small ribosomal subunit protein uS11 of Marinobacter nauticus (strain ATCC 700491 / DSM 11845 / VT8) (Marinobacter aquaeolei).